Here is a 329-residue protein sequence, read N- to C-terminus: Protein SPATA31F3 (329 aa).

The helical transmembrane segment at 11–31 (VGYSVYTYGSIFIIALIIWQV) threads the bilayer. The stretch at 58–85 (SDRATRAKRTSKEEAEKLQKLLDTMKSQ) forms a coiled coil. Disordered regions lie at residues 149 to 184 (ADRSSELTYQDTRDVSLSSRFPQSQETDQQSTRSAT), 201 to 250 (QQLD…AAPT), and 288 to 329 (KPMT…KRNI). A phosphoserine mark is found at S152 and S153. Polar residues-rich tracts occupy residues 154 to 184 (ELTYQDTRDVSLSSRFPQSQETDQQSTRSAT) and 201 to 223 (QQLDPQGSKMTQDAKGLSSSSTD). Positions 232-242 (QKKRKKTKKLA) are enriched in basic residues. The segment covering 293-320 (EPEKTHSPVRDQAEGAEKKKKPECDLKA) has biased composition (basic and acidic residues).

Belongs to the SPATA31 family.

It localises to the membrane. The polypeptide is Protein SPATA31F3 (Rattus norvegicus (Rat)).